A 376-amino-acid polypeptide reads, in one-letter code: uncharacterized protein (376 aa).

Helical transmembrane passes span 153 to 173 (QGTL…VLFA) and 188 to 208 (HRPF…LAVY).

The protein localises to the membrane. This is an uncharacterized protein from Saccharomyces cerevisiae (strain ATCC 204508 / S288c) (Baker's yeast).